The chain runs to 416 residues: Phosphatidylinositol 5-phosphate 4-kinase type-2 gamma (416 aa).

The 378-residue stretch at 38 to 415 (ASDPMLSVFM…RFREFISNIF (378 aa)) folds into the PIPK domain.

Post-translationally, phosphorylated, phosphorylation is induced by EGF.

It localises to the endoplasmic reticulum. The protein resides in the cytoplasm. The catalysed reaction is a 1,2-diacyl-sn-glycero-3-phospho-(1D-myo-inositol-5-phosphate) + ATP = a 1,2-diacyl-sn-glycero-3-phospho-(1D-myo-inositol-4,5-bisphosphate) + ADP + H(+). The enzyme catalyses 1,2-dihexadecanoyl-sn-glycero-3-phospho-(1D-myo-inositol-5-phosphate) + ATP = 1,2-dihexadecanoyl-sn-glycero-3-phospho-(1D-myo-inositol-4,5-bisphosphate) + ADP + H(+). It carries out the reaction 1,2-dihexadecanoyl-sn-glycero-3-phospho-(1D-myo-inositol-5-phosphate) + GTP = 1,2-dihexadecanoyl-sn-glycero-3-phospho-(1D-myo-inositol-4,5-bisphosphate) + GDP + H(+). Functionally, phosphatidylinositol 5-phosphate 4-kinase with low enzymatic activity. May be a GTP sensor, has higher GTP-dependent kinase activity than ATP-dependent kinase activity. This is Phosphatidylinositol 5-phosphate 4-kinase type-2 gamma (pip4k2c) from Danio rerio (Zebrafish).